The chain runs to 340 residues: Phospho-N-acetylmuramoyl-pentapeptide-transferase (340 aa).

9 helical membrane passes run V22–P42, T69–W89, A95–I115, L129–P149, G156–G176, G186–H206, P209–N229, L235–D257, and V316–H336.

Belongs to the glycosyltransferase 4 family. MraY subfamily. Mg(2+) serves as cofactor.

It is found in the cell inner membrane. The catalysed reaction is UDP-N-acetyl-alpha-D-muramoyl-L-alanyl-gamma-D-glutamyl-meso-2,6-diaminopimeloyl-D-alanyl-D-alanine + di-trans,octa-cis-undecaprenyl phosphate = di-trans,octa-cis-undecaprenyl diphospho-N-acetyl-alpha-D-muramoyl-L-alanyl-D-glutamyl-meso-2,6-diaminopimeloyl-D-alanyl-D-alanine + UMP. It participates in cell wall biogenesis; peptidoglycan biosynthesis. Catalyzes the initial step of the lipid cycle reactions in the biosynthesis of the cell wall peptidoglycan: transfers peptidoglycan precursor phospho-MurNAc-pentapeptide from UDP-MurNAc-pentapeptide onto the lipid carrier undecaprenyl phosphate, yielding undecaprenyl-pyrophosphoryl-MurNAc-pentapeptide, known as lipid I. The chain is Phospho-N-acetylmuramoyl-pentapeptide-transferase from Synechococcus sp. (strain JA-2-3B'a(2-13)) (Cyanobacteria bacterium Yellowstone B-Prime).